We begin with the raw amino-acid sequence, 206 residues long: Protein-methionine-sulfoxide reductase heme-binding subunit MsrQ (206 aa).

A run of 5 helical transmembrane segments spans residues 13 to 33 (IAIW…INLG), 79 to 99 (LLGL…SILE), 116 to 136 (PYLT…LTST), 147 to 167 (WQKL…HYLW), and 169 to 189 (VKTL…LLLL).

This sequence belongs to the MsrQ family. Heterodimer of a catalytic subunit (MsrP) and a heme-binding subunit (MsrQ). Requires FMN as cofactor. It depends on heme b as a cofactor.

The protein localises to the cell inner membrane. Functionally, part of the MsrPQ system that repairs oxidized periplasmic proteins containing methionine sulfoxide residues (Met-O), using respiratory chain electrons. Thus protects these proteins from oxidative-stress damage caused by reactive species of oxygen and chlorine generated by the host defense mechanisms. MsrPQ is essential for the maintenance of envelope integrity under bleach stress, rescuing a wide series of structurally unrelated periplasmic proteins from methionine oxidation. MsrQ provides electrons for reduction to the reductase catalytic subunit MsrP, using the quinone pool of the respiratory chain. The chain is Protein-methionine-sulfoxide reductase heme-binding subunit MsrQ from Yersinia pestis bv. Antiqua (strain Antiqua).